Consider the following 97-residue polypeptide: MARVTVEDCLEHVENRFDLVLKAAKRAHILELGGAEPMVPRDNDKPAVLALREIAAGYDVTREGQEQETEEVDVDRNVLAETAKMNKAVASQKESEV.

The protein belongs to the RNA polymerase subunit omega family. The RNAP catalytic core consists of 2 alpha, 1 beta, 1 beta' and 1 omega subunit. When a sigma factor is associated with the core the holoenzyme is formed, which can initiate transcription.

It catalyses the reaction RNA(n) + a ribonucleoside 5'-triphosphate = RNA(n+1) + diphosphate. Functionally, promotes RNA polymerase assembly. Latches the N- and C-terminal regions of the beta' subunit thereby facilitating its interaction with the beta and alpha subunits. The protein is DNA-directed RNA polymerase subunit omega of Coxiella burnetii (strain CbuK_Q154) (Coxiella burnetii (strain Q154)).